The chain runs to 787 residues: Integrin beta-3 (787 aa).

An N-terminal signal peptide occupies residues methionine 1–glycine 25. At serine 27–aspartate 717 the chain is on the extracellular side. The PSI domain maps to isoleucine 29–serine 75. Intrachain disulfides connect cysteine 30/cysteine 48, cysteine 38/cysteine 460, cysteine 41/cysteine 63, cysteine 51/cysteine 74, cysteine 202/cysteine 209, cysteine 257/cysteine 298, cysteine 399/cysteine 411, cysteine 431/cysteine 458, cysteine 462/cysteine 482, cysteine 473/cysteine 485, cysteine 487/cysteine 496, cysteine 498/cysteine 528, cysteine 511/cysteine 526, cysteine 520/cysteine 531, cysteine 533/cysteine 546, cysteine 548/cysteine 569, cysteine 553/cysteine 567, cysteine 561/cysteine 572, and cysteine 574/cysteine 583. Residues aspartate 134–isoleucine 376 form the VWFA domain. Residues serine 146 and serine 148 each contribute to the Mg(2+) site. Serine 148, aspartate 151, aspartate 152, and aspartate 183 together coordinate Ca(2+). Residues cysteine 202–cysteine 209 are CX3CL1-binding. The involved in CX3CL1-, NRG1-, FGF1- and IGF1-binding stretch occupies residues cysteine 202–cysteine 209. Positions 240, 242, 244, 245, and 276 each coordinate Ca(2+). Residue glutamate 245 coordinates Mg(2+). The tract at residues leucine 292–methionine 312 is CX3CL1-binding. N-linked (GlcNAc...) asparagine glycans are attached at residues asparagine 345 and asparagine 396. I-EGF domains follow at residues cysteine 462–glutamate 497, cysteine 498–glutamate 547, cysteine 548–asparagine 584, and cysteine 585–glutamate 624. N-linked (GlcNAc...) asparagine glycosylation occurs at asparagine 477. Asparagine 584 is a glycosylation site (N-linked (GlcNAc...) asparagine). 9 cysteine pairs are disulfide-bonded: cysteine 585-cysteine 608, cysteine 592-cysteine 606, cysteine 600-cysteine 611, cysteine 613-cysteine 623, cysteine 626-cysteine 629, cysteine 633-cysteine 680, cysteine 639-cysteine 660, cysteine 642-cysteine 656, and cysteine 688-cysteine 712. An N-linked (GlcNAc...) asparagine glycan is attached at asparagine 679. The chain crosses the membrane as a helical span at residues isoleucine 718–leucine 738. At isoleucine 739 to threonine 787 the chain is on the cytoplasmic side. Threonine 766 bears the Phosphothreonine mark. The residue at position 772 (tyrosine 772) is a Phosphotyrosine. Positions threonine 776–isoleucine 782 match the LIR motif. Threonine 778 is subject to Phosphothreonine. The residue at position 784 (tyrosine 784) is a Phosphotyrosine.

This sequence belongs to the integrin beta chain family. In terms of assembly, heterodimer of an alpha and a beta subunit. Beta-3 (ITGB3) associates with either alpha-IIB (ITGA2B) or alpha-V (ITGAV). Interacts with FLNB and COMP. Interacts with PDIA6 following platelet stimulation. Interacts with SYK; upon activation by ITGB3 promotes platelet adhesion. Interacts with MYO10. Interacts with DAB2. Interacts with FERMT2. Integrin ITGAV:ITGB3 interacts with FBLN5 (via N-terminus). Interacts with EMP2; regulates the levels of the heterodimer ITGA5:ITGB3 integrin expression on the plasma membrane. ITGAV:ITGB3 interacts with CCN3. ITGAV:ITGB3 and ITGA2B:ITGB3 interact with SELP (via C-type lectin domain); the interaction mediates cell-cell interaction and adhesion. ITGAV:ITGB3 interacts with AGRA2. ITGAV:ITGB3 is found in a ternary complex with CX3CR1 and CX3CL1. ITGAV:ITGB3 is found in a ternary complex with NRG1 and ERBB3. ITGAV:ITGB3 is found in a ternary complex with FGF1 and FGFR1. ITGAV:ITGB3 interacts with FGF2; it is likely that FGF2 can simultaneously bind ITGAV:ITGB3 and FGF receptors. ITGAV:ITGB3 binds to IL1B. ITGAV:ITGB3 is found in a ternary complex with IGF1 and IGF1R. ITGAV:ITGB3 interacts with IGF2. ITGAV:ITGB3 interacts with FBN1. ITGAV:ITGB3 interacts with CD9, CD81 and CD151 (via second extracellular domain). Interacts (via the allosteric site (site 2)) with CXCL12 in a CXCR4-independent manner. Interacts with MXRA8/DICAM; the interaction inhibits ITGAV:ITGB3 heterodimer formation. ITGAV:ITGB3 interacts with PTN. Forms a complex with PTPRZ1 and PTN that stimulates endothelial cell migration through ITGB3 Tyr-772 phosphorylation. ITGAV:ITGB3 interacts with SLC6A4. Interacts with SLC6A4 (via C-terminus); this interaction regulates SLC6A4 trafficking. ITGA2B:ITGB3 interacts with PPIA/CYPA; the interaction is ROS and PPIase activity-dependent and is increased in the presence of thrombin. Interacts with tensin TNS3; TNS3 also interacts with PEAK1, thus acting as an adapter molecule to bridge the association of PEAK1 with ITGB3. Interacts with TM4SF19. Phosphorylated on tyrosine residues in response to thrombin-induced platelet aggregation. Probably involved in outside-in signaling.

Its subcellular location is the cell membrane. It is found in the cell projection. It localises to the lamellipodium membrane. The protein localises to the cell junction. The protein resides in the focal adhesion. Its subcellular location is the postsynaptic cell membrane. It is found in the synapse. Functionally, integrin alpha-V/beta-3 (ITGAV:ITGB3) is a receptor for cytotactin, fibronectin, laminin, matrix metalloproteinase-2, osteopontin, osteomodulin, prothrombin, thrombospondin, vitronectin and von Willebrand factor. Integrin alpha-IIB/beta-3 (ITGA2B:ITGB3) is a receptor for fibronectin, fibrinogen, plasminogen, prothrombin, thrombospondin and vitronectin. Integrins alpha-IIB/beta-3 and alpha-V/beta-3 recognize the sequence R-G-D in a wide array of ligands. Integrin alpha-IIB/beta-3 recognizes the sequence H-H-L-G-G-G-A-K-Q-A-G-D-V in fibrinogen gamma chain. Following activation integrin alpha-IIB/beta-3 brings about platelet/platelet interaction through binding of soluble fibrinogen. This step leads to rapid platelet aggregation which physically plugs ruptured endothelial surfaces. Fibrinogen binding enhances SELP expression in activated platelets. ITGAV:ITGB3 binds to fractalkine (CX3CL1) and acts as its coreceptor in CX3CR1-dependent fractalkine signaling. ITGAV:ITGB3 binds to NRG1 (via EGF domain) and this binding is essential for NRG1-ERBB signaling. ITGAV:ITGB3 binds to FGF1 and this binding is essential for FGF1 signaling. ITGAV:ITGB3 binds to FGF2 and this binding is essential for FGF2 signaling. ITGAV:ITGB3 binds to IGF1 and this binding is essential for IGF1 signaling. ITGAV:ITGB3 binds to IGF2 and this binding is essential for IGF2 signaling. ITGAV:ITGB3 binds to IL1B and this binding is essential for IL1B signaling. ITGAV:ITGB3 binds to PLA2G2A via a site (site 2) which is distinct from the classical ligand-binding site (site 1) and this induces integrin conformational changes and enhanced ligand binding to site 1. ITGAV:ITGB3 acts as a receptor for fibrillin-1 (FBN1) and mediates R-G-D-dependent cell adhesion to FBN1. In brain, plays a role in synaptic transmission and plasticity. Involved in the regulation of the serotonin neurotransmission, is required to localize to specific compartments within the synapse the serotonin receptor SLC6A4 and for an appropriate reuptake of serotonin. Controls excitatory synaptic strength by regulating GRIA2-containing AMPAR endocytosis, which affects AMPAR abundance and composition. ITGAV:ITGB3 acts as a receptor for CD40LG. ITGAV:ITGB3 acts as a receptor for IBSP and promotes cell adhesion and migration to IBSP. The protein is Integrin beta-3 of Rattus norvegicus (Rat).